Here is a 321-residue protein sequence, read N- to C-terminus: Lipoyl synthase (321 aa).

Cysteine 68, cysteine 73, cysteine 79, cysteine 94, cysteine 98, cysteine 101, and serine 308 together coordinate [4Fe-4S] cluster. Residues 80 to 297 (FNHGTATFMI…KALADELGFT (218 aa)) form the Radical SAM core domain.

The protein belongs to the radical SAM superfamily. Lipoyl synthase family. [4Fe-4S] cluster serves as cofactor.

The protein resides in the cytoplasm. The enzyme catalyses [[Fe-S] cluster scaffold protein carrying a second [4Fe-4S](2+) cluster] + N(6)-octanoyl-L-lysyl-[protein] + 2 oxidized [2Fe-2S]-[ferredoxin] + 2 S-adenosyl-L-methionine + 4 H(+) = [[Fe-S] cluster scaffold protein] + N(6)-[(R)-dihydrolipoyl]-L-lysyl-[protein] + 4 Fe(3+) + 2 hydrogen sulfide + 2 5'-deoxyadenosine + 2 L-methionine + 2 reduced [2Fe-2S]-[ferredoxin]. The protein operates within protein modification; protein lipoylation via endogenous pathway; protein N(6)-(lipoyl)lysine from octanoyl-[acyl-carrier-protein]: step 2/2. Functionally, catalyzes the radical-mediated insertion of two sulfur atoms into the C-6 and C-8 positions of the octanoyl moiety bound to the lipoyl domains of lipoate-dependent enzymes, thereby converting the octanoylated domains into lipoylated derivatives. The sequence is that of Lipoyl synthase from Shewanella putrefaciens (strain CN-32 / ATCC BAA-453).